Here is a 363-residue protein sequence, read N- to C-terminus: Histidinol-phosphate aminotransferase (363 aa).

K227 bears the N6-(pyridoxal phosphate)lysine mark.

This sequence belongs to the class-II pyridoxal-phosphate-dependent aminotransferase family. Histidinol-phosphate aminotransferase subfamily. In terms of assembly, homodimer. It depends on pyridoxal 5'-phosphate as a cofactor.

It catalyses the reaction L-histidinol phosphate + 2-oxoglutarate = 3-(imidazol-4-yl)-2-oxopropyl phosphate + L-glutamate. It participates in amino-acid biosynthesis; L-histidine biosynthesis; L-histidine from 5-phospho-alpha-D-ribose 1-diphosphate: step 7/9. The polypeptide is Histidinol-phosphate aminotransferase (Akkermansia muciniphila (strain ATCC BAA-835 / DSM 22959 / JCM 33894 / BCRC 81048 / CCUG 64013 / CIP 107961 / Muc)).